The sequence spans 358 residues: 3-dehydroquinate synthase (358 aa).

Residues 70-75 (DGEQYK), 104-108 (GVVGD), 128-129 (TT), lysine 141, lysine 150, and 168-171 (CLNT) contribute to the NAD(+) site. Positions 183, 246, and 263 each coordinate Zn(2+).

This sequence belongs to the sugar phosphate cyclases superfamily. Dehydroquinate synthase family. Co(2+) is required as a cofactor. The cofactor is Zn(2+). Requires NAD(+) as cofactor.

Its subcellular location is the cytoplasm. The enzyme catalyses 7-phospho-2-dehydro-3-deoxy-D-arabino-heptonate = 3-dehydroquinate + phosphate. It participates in metabolic intermediate biosynthesis; chorismate biosynthesis; chorismate from D-erythrose 4-phosphate and phosphoenolpyruvate: step 2/7. In terms of biological role, catalyzes the conversion of 3-deoxy-D-arabino-heptulosonate 7-phosphate (DAHP) to dehydroquinate (DHQ). The protein is 3-dehydroquinate synthase of Shewanella sediminis (strain HAW-EB3).